Consider the following 202-residue polypeptide: Large ribosomal subunit protein bL25 (202 aa).

Belongs to the bacterial ribosomal protein bL25 family. CTC subfamily. In terms of assembly, part of the 50S ribosomal subunit; part of the 5S rRNA/L5/L18/L25 subcomplex. Contacts the 5S rRNA. Binds to the 5S rRNA independently of L5 and L18.

This is one of the proteins that binds to the 5S RNA in the ribosome where it forms part of the central protuberance. In Chlorobium luteolum (strain DSM 273 / BCRC 81028 / 2530) (Pelodictyon luteolum), this protein is Large ribosomal subunit protein bL25.